Reading from the N-terminus, the 189-residue chain is UPF0312 protein VC0395_0473/VC395_A0785 (189 aa).

The first 22 residues, 1–22, serve as a signal peptide directing secretion; the sequence is MKKTLMAVGLAAVISIPFAANA.

Belongs to the UPF0312 family. Type 1 subfamily.

It is found in the periplasm. The protein is UPF0312 protein VC0395_0473/VC395_A0785 of Vibrio cholerae serotype O1 (strain ATCC 39541 / Classical Ogawa 395 / O395).